The primary structure comprises 167 residues: uncharacterized protein (167 aa).

A disordered region spans residues 1–21 (MFDFSFPTPASAGTRMGPASC).

This is an uncharacterized protein from Homo sapiens (Human).